The sequence spans 184 residues: ATP-dependent protease subunit HslV (184 aa).

Thr12 is a catalytic residue. Residues Ala166, Cys169, and Thr172 each coordinate Na(+).

It belongs to the peptidase T1B family. HslV subfamily. In terms of assembly, a double ring-shaped homohexamer of HslV is capped on each side by a ring-shaped HslU homohexamer. The assembly of the HslU/HslV complex is dependent on binding of ATP.

It is found in the cytoplasm. The enzyme catalyses ATP-dependent cleavage of peptide bonds with broad specificity.. Its activity is regulated as follows. Allosterically activated by HslU binding. Its function is as follows. Protease subunit of a proteasome-like degradation complex believed to be a general protein degrading machinery. This chain is ATP-dependent protease subunit HslV, found in Brucella melitensis biotype 1 (strain ATCC 23456 / CCUG 17765 / NCTC 10094 / 16M).